A 170-amino-acid polypeptide reads, in one-letter code: Pollen-specific protein C13 (170 aa).

Residues methionine 1–alanine 27 form the signal peptide. 3 cysteine pairs are disulfide-bonded: cysteine 43–cysteine 114, cysteine 46–cysteine 155, and cysteine 67–cysteine 102. An N-linked (GlcNAc...) asparagine glycan is attached at asparagine 53.

It belongs to the Ole e I family. Pollen.

The protein is Pollen-specific protein C13 (MGS1) of Zea mays (Maize).